The sequence spans 156 residues: Arginine repressor (156 aa).

Belongs to the ArgR family.

The protein localises to the cytoplasm. It functions in the pathway amino-acid biosynthesis; L-arginine biosynthesis [regulation]. In terms of biological role, regulates arginine biosynthesis genes. The sequence is that of Arginine repressor from Tolumonas auensis (strain DSM 9187 / NBRC 110442 / TA 4).